We begin with the raw amino-acid sequence, 457 residues long: Protein translocase subunit SecY (457 aa).

The Cytoplasmic segment spans residues Met-1 to Pro-20. Residues Glu-21–Pro-47 form a helical membrane-spanning segment. At Leu-48–Gln-59 the chain is on the extracellular side. Residues Val-60–Phe-67 constitute an intramembrane region (helical). The discontinuously helical transmembrane segment at Val-60–Ile-88 threads the bilayer. The stretch at Ala-68 to Ile-79 is an intramembrane region. Positions Gly-80–Ile-88 form an intramembrane region, helical. Topologically, residues Ile-89–Arg-109 are cytoplasmic. A helical membrane pass occupies residues Lys-110–Gly-134. The Extracellular portion of the chain corresponds to Arg-135–Pro-146. The chain crosses the membrane as a helical span at residues Leu-147–Gln-171. At Lys-172–Ser-178 the chain is on the cytoplasmic side. A helical transmembrane segment spans residues Ala-179–Phe-197. Residues Gly-198–Pro-229 are Extracellular-facing. The helical transmembrane segment at Asp-230–Arg-251 threads the bilayer. Residues Val-252–Thr-276 are Cytoplasmic-facing. A helical transmembrane segment spans residues Asn-277 to Ala-298. Residues Asp-299–Val-332 are Extracellular-facing. The helical transmembrane segment at Lys-333–Trp-352 threads the bilayer. Over Val-353 to Leu-395 the chain is Cytoplasmic. The helical transmembrane segment at Thr-396 to Gly-414 threads the bilayer. Residues Ala-415–Gly-417 are Extracellular-facing. A helical transmembrane segment spans residues Thr-418–Tyr-432. Over Tyr-433 to Val-457 the chain is Cytoplasmic.

The protein belongs to the SecY/SEC61-alpha family. In terms of assembly, component of the Sec protein translocase complex. Heterotrimer consisting of alpha (SecY), beta (SecG) and gamma (SecE) subunits. The heterotrimers can form oligomers, although 1 heterotrimer is thought to be able to translocate proteins. Interacts with the ribosome. May interact with SecDF, and other proteins may be involved.

Its subcellular location is the cell membrane. The central subunit of the protein translocation channel SecYEG. Consists of two halves formed by TMs 1-5 and 6-10. These two domains form a lateral gate at the front which open onto the bilayer between TMs 2 and 7, and are clamped together by SecE at the back. The channel is closed by both a pore ring composed of hydrophobic SecY resides and a short helix (helix 2A) on the extracellular side of the membrane which forms a plug. The plug probably moves laterally to allow the channel to open. The ring and the pore may move independently. The protein is Protein translocase subunit SecY of Aeropyrum pernix (strain ATCC 700893 / DSM 11879 / JCM 9820 / NBRC 100138 / K1).